The primary structure comprises 498 residues: ATP synthase subunit beta, chloroplastic (498 aa).

G172 to T179 serves as a coordination point for ATP.

The protein belongs to the ATPase alpha/beta chains family. F-type ATPases have 2 components, CF(1) - the catalytic core - and CF(0) - the membrane proton channel. CF(1) has five subunits: alpha(3), beta(3), gamma(1), delta(1), epsilon(1). CF(0) has four main subunits: a(1), b(1), b'(1) and c(9-12).

It localises to the plastid. Its subcellular location is the chloroplast thylakoid membrane. The catalysed reaction is ATP + H2O + 4 H(+)(in) = ADP + phosphate + 5 H(+)(out). In terms of biological role, produces ATP from ADP in the presence of a proton gradient across the membrane. The catalytic sites are hosted primarily by the beta subunits. This chain is ATP synthase subunit beta, chloroplastic, found in Gossypium barbadense (Sea Island cotton).